Consider the following 314-residue polypeptide: Small ribosomal subunit biogenesis GTPase RsgA (314 aa).

The tract at residues 1 to 21 (MKRAPTKQPAKPAARGGERAQ) is disordered. A CP-type G domain is found at 85 to 246 (SDQFKSKLFA…LIDSPGFQEF (162 aa)). GTP-binding positions include 134 to 137 (NKID) and 188 to 196 (GQSGMGKST). Residues C270, C275, H277, and C283 each contribute to the Zn(2+) site.

Belongs to the TRAFAC class YlqF/YawG GTPase family. RsgA subfamily. As to quaternary structure, monomer. Associates with 30S ribosomal subunit, binds 16S rRNA. The cofactor is Zn(2+).

The protein localises to the cytoplasm. One of several proteins that assist in the late maturation steps of the functional core of the 30S ribosomal subunit. Helps release RbfA from mature subunits. May play a role in the assembly of ribosomal proteins into the subunit. Circularly permuted GTPase that catalyzes slow GTP hydrolysis, GTPase activity is stimulated by the 30S ribosomal subunit. The protein is Small ribosomal subunit biogenesis GTPase RsgA of Burkholderia pseudomallei (strain 1710b).